A 627-amino-acid polypeptide reads, in one-letter code: 1,4-alpha-glucan branching enzyme GlgB (627 aa).

Asp-309 acts as the Nucleophile in catalysis. The active-site Proton donor is Glu-352.

The protein belongs to the glycosyl hydrolase 13 family. GlgB subfamily. Monomer.

The enzyme catalyses Transfers a segment of a (1-&gt;4)-alpha-D-glucan chain to a primary hydroxy group in a similar glucan chain.. Its pathway is glycan biosynthesis; glycogen biosynthesis. Functionally, catalyzes the formation of the alpha-1,6-glucosidic linkages in glycogen by scission of a 1,4-alpha-linked oligosaccharide from growing alpha-1,4-glucan chains and the subsequent attachment of the oligosaccharide to the alpha-1,6 position. The sequence is that of 1,4-alpha-glucan branching enzyme GlgB (glgB) from Bacillus subtilis (strain 168).